A 1012-amino-acid polypeptide reads, in one-letter code: F-box DNA helicase 1 (1012 aa).

A disordered region spans residues 1-54 (MHLTADDCEALSRSTEGLSSLTQPLNQRRSRGDVNRGLQPTHRTRTQPGAQGRQ). Positions 12-27 (SRSTEGLSSLTQPLNQ) are enriched in polar residues. Positions 185-234 (QGSIEDLPDEVLRSIFAFLPVTDLYQSLSLVCRRWRIIVGDPWFIPWKKL) constitute an F-box domain. A UvrD-like helicase ATP-binding domain is found at 427-692 (THEQQRILNH…YYLTQSFRFG (266 aa)). An ATP-binding site is contributed by 448–455 (AFAGTGKT).

The protein belongs to the helicase family. UvrD subfamily. As to quaternary structure, part of the SCF (SKP1-CUL1-F-box) E3 ubiquitin-protein ligase complex SCF(FBH1).

It is found in the nucleus. Its subcellular location is the chromosome. The enzyme catalyses Couples ATP hydrolysis with the unwinding of duplex DNA by translocating in the 3'-5' direction.. It carries out the reaction ATP + H2O = ADP + phosphate + H(+). It participates in protein modification; protein ubiquitination. 3'-5' DNA helicase and substrate-recognition component of the SCF(FBH1) E3 ubiquitin ligase complex that plays a key role in response to stalled/damaged replication forks. Involved in genome maintenance by acting as an anti-recombinogenic helicase and preventing extensive strand exchange during homologous recombination: promotes RAD51 filament dissolution from stalled forks, thereby inhibiting homologous recombination and preventing excessive recombination. Also promotes cell death and DNA double-strand breakage in response to replication stress: promotes the endonucleolytic DNA cleavage following prolonged replication stress via its helicase activity, possibly to eliminate cells with excessive replication stress. The polypeptide is F-box DNA helicase 1 (Gallus gallus (Chicken)).